Here is a 149-residue protein sequence, read N- to C-terminus: Calmodulin (149 aa).

An N-acetylalanine modification is found at A2. EF-hand domains are found at residues 8-43 (EQVSEFKEAFSLFDKDGDGQITTKELGTVMRSLGQN), 44-79 (PSESELQDMINEVDADNNGTIDFPEFLTMMARKMKD), 81-116 (DSEEEIREAFKVFDRDNNGFISAAELRHVMTSIGEK), and 117-149 (LTDDEVDEMIREADQDGDGRIDYNEFVQLMMQK). The Ca(2+) site is built by D21, D23, D25, Q27, E32, D57, D59, N61, T63, E68, D94, D96, N98, E105, D130, D132, D134, R136, and E141.

It belongs to the calmodulin family.

Its function is as follows. Calmodulin mediates the control of a large number of enzymes, ion channels and other proteins by Ca(2+). Among the enzymes to be stimulated by the calmodulin-Ca(2+) complex are a number of protein kinases and phosphatases. The sequence is that of Calmodulin from Colletotrichum gloeosporioides (Anthracnose fungus).